The following is a 600-amino-acid chain: Putative DNA 3'-5' helicase Rad25 (600 aa).

Residues V253 to I402 enclose the Helicase ATP-binding domain. Residue G266 to T273 coordinates ATP. A DEAH box motif is present at residues D356–H359. The region spanning E457 to P600 is the Helicase C-terminal domain. The tract at residues R569–P600 is disordered. Over residues R590–P600 the composition is skewed to basic and acidic residues.

Belongs to the helicase family. RAD25/XPB subfamily.

The catalysed reaction is Couples ATP hydrolysis with the unwinding of duplex DNA by translocating in the 3'-5' direction.. The enzyme catalyses ATP + H2O = ADP + phosphate + H(+). The polypeptide is Putative DNA 3'-5' helicase Rad25 (Halobacterium salinarum (strain ATCC 700922 / JCM 11081 / NRC-1) (Halobacterium halobium)).